The primary structure comprises 120 residues: Large ribosomal subunit protein uL18 (120 aa).

The protein belongs to the universal ribosomal protein uL18 family. Part of the 50S ribosomal subunit; part of the 5S rRNA/L5/L18/L25 subcomplex. Contacts the 5S and 23S rRNAs.

This is one of the proteins that bind and probably mediate the attachment of the 5S RNA into the large ribosomal subunit, where it forms part of the central protuberance. The polypeptide is Large ribosomal subunit protein uL18 (Finegoldia magna (strain ATCC 29328 / DSM 20472 / WAL 2508) (Peptostreptococcus magnus)).